A 637-amino-acid chain; its full sequence is Protein arginine N-methyltransferase 5 (637 aa).

Ala-2 carries the post-translational modification N-acetylalanine. A TIM barrel region spans residues 13 to 292 (RVSSGRDLNC…YLEYLSQNRP (280 aa)). Residues 308–615 (LQSPLQPLMD…SNSKKVWYEW (308 aa)) enclose the SAM-dependent MTase PRMT-type domain. Residue Tyr-324 participates in S-adenosyl-L-methionine binding. Phe-327 is a binding site for a protein. S-adenosyl-L-methionine is bound by residues 333–334 (KY), Glu-392, and 419–420 (DM). Glu-435 and Glu-444 together coordinate a protein. Active-site proton donor/acceptor residues include Glu-435 and Glu-444. A beta barrel region spans residues 465-637 (PGEYTSFLAP…PTGRSYTIGL (173 aa)). The dimerization stretch occupies residues 488-494 (REKDRDP).

Belongs to the class I-like SAM-binding methyltransferase superfamily. Protein arginine N-methyltransferase family. Forms, at least, homodimers and homotetramers. Component of the methylosome complex, composed of PRMT5, WDR77 and CLNS1A. Found in a complex composed of PRMT5, WDR77 and RIOK1. RIOK1 and CLNS1A associate with PRMT5 in a mutually exclusive fashion, which allows the recruitment of distinct methylation substrates, such as nucleolin/NCL and Sm proteins, respectively. Interacts with PRDM1. Identified in a complex composed of methylosome and PRMT1 and ERH. Interacts with EGFR; methylates EGFR and stimulates EGFR-mediated ERK activation. Interacts with HOXA9. Interacts with SRGAP2. Found in a complex with COPRS, RUNX1 and CBFB. Interacts with CHTOP; the interaction symmetrically methylates CHTOP, but seems to require the presence of PRMT1. Interacts with EPB41L3; this modulates methylation of target proteins. Component of a high molecular weight E2F-pocket protein complex, CERC (cyclin E1 repressor complex). Associates with SWI/SNF remodeling complexes containing SMARCA2 and SMARCA4. Interacts with JAK2, SSTR1, SUPT5H, BRAF and with active RAF1. Interacts with LSM11, PRMT7 and SNRPD3. Interacts with COPRS; promoting its recruitment on histone H4. Interacts with CLNS1A/pICln. Identified in a complex with CLNS1A/pICln and Sm proteins. Interacts with RPS10. Interacts with WDR77. Interacts with IWS1. Interacts with CRY1. Interacts with POLR2A. Interacts with SMN1/SMN2. Interacts with LYAR; this interaction is direct. Interacts with TTC5/STRAP; this interaction is DNA damage-dependent and promotes PRMT5 interaction with p53/TP53. Interacts with p53/TP53 in response to DNA damage; the interaction is TTC5/STRAP dependent. Interacts with FAM47E; the interaction is direct, promotes PRMT5 localization to chromatin, and does not disrupt its association with WDR77 or STUB1. Interacts with TDRD6. Interacts with STUB1. Interacts with MBD2. Does not interact with MBD3.

The protein localises to the cytoplasm. It is found in the nucleus. Its subcellular location is the golgi apparatus. It catalyses the reaction L-arginyl-[protein] + 2 S-adenosyl-L-methionine = N(omega),N(omega)'-dimethyl-L-arginyl-[protein] + 2 S-adenosyl-L-homocysteine + 2 H(+). With respect to regulation, activity is increased by EGF, HGF, FGF1 or FGF2 treatments, and slightly decreased by NGF treatment. Functionally, arginine methyltransferase that can both catalyze the formation of omega-N monomethylarginine (MMA) and symmetrical dimethylarginine (sDMA), with a preference for the formation of MMA. Specifically mediates the symmetrical dimethylation of arginine residues in the small nuclear ribonucleoproteins Sm D1 (SNRPD1) and Sm D3 (SNRPD3); such methylation being required for the assembly and biogenesis of snRNP core particles. Methylates SUPT5H and may regulate its transcriptional elongation properties. May methylate the N-terminal region of MBD2. Mono- and dimethylates arginine residues of myelin basic protein (MBP) in vitro. May play a role in cytokine-activated transduction pathways. Negatively regulates cyclin E1 promoter activity and cellular proliferation. Methylates histone H2A and H4 'Arg-3' during germ cell development. Methylates histone H3 'Arg-8', which may repress transcription. Methylates the Piwi proteins (PIWIL1, PIWIL2 and PIWIL4), methylation of Piwi proteins being required for the interaction with Tudor domain-containing proteins and subsequent localization to the meiotic nuage. Methylates RPS10. Attenuates EGF signaling through the MAPK1/MAPK3 pathway acting at 2 levels. First, monomethylates EGFR; this enhances EGFR 'Tyr-1197' phosphorylation and PTPN6 recruitment, eventually leading to reduced SOS1 phosphorylation. Second, methylates RAF1 and probably BRAF, hence destabilizing these 2 signaling proteins and reducing their catalytic activity. Required for induction of E-selectin and VCAM-1, on the endothelial cells surface at sites of inflammation. Methylates HOXA9. Methylates and regulates SRGAP2 which is involved in cell migration and differentiation. Acts as a transcriptional corepressor in CRY1-mediated repression of the core circadian component PER1 by regulating the H4R3 dimethylation at the PER1 promoter. Methylates GM130/GOLGA2, regulating Golgi ribbon formation. Methylates H4R3 in genes involved in glioblastomagenesis in a CHTOP- and/or TET1-dependent manner. Symmetrically methylates POLR2A, a modification that allows the recruitment to POLR2A of proteins including SMN1/SMN2 and SETX. This is required for resolving RNA-DNA hybrids created by RNA polymerase II, that form R-loop in transcription terminal regions, an important step in proper transcription termination. Along with LYAR, binds the promoter of gamma-globin HBG1/HBG2 and represses its expression. Symmetrically methylates NCL. Methylates p53/TP53; methylation might possibly affect p53/TP53 target gene specificity. Involved in spliceosome maturation and mRNA splicing in prophase I spermatocytes through the catalysis of the symmetrical arginine dimethylation of SNRPB (small nuclear ribonucleoprotein-associated protein) and the interaction with tudor domain-containing protein TDRD6. This is Protein arginine N-methyltransferase 5 (PRMT5) from Macaca fascicularis (Crab-eating macaque).